A 370-amino-acid chain; its full sequence is Putative glutamate--cysteine ligase 2 (370 aa).

The protein belongs to the glutamate--cysteine ligase type 2 family. YbdK subfamily.

It catalyses the reaction L-cysteine + L-glutamate + ATP = gamma-L-glutamyl-L-cysteine + ADP + phosphate + H(+). Functionally, ATP-dependent carboxylate-amine ligase which exhibits weak glutamate--cysteine ligase activity. The polypeptide is Putative glutamate--cysteine ligase 2 (Methylibium petroleiphilum (strain ATCC BAA-1232 / LMG 22953 / PM1)).